A 796-amino-acid polypeptide reads, in one-letter code: Peroxisome proliferator-activated receptor gamma coactivator 1-alpha (796 aa).

Position 77 is an N6-acetyllysine (K77). The disordered stretch occupies residues 98-138 (PVDEDGLPSFDALTDGDVTTDNEASPSSMPDGTPPPQEAEE). Residues 114 to 127 (DVTTDNEASPSSMP) are compositionally biased toward polar residues. Positions 142–146 (LKKLL) match the LXXLL motif motif. An N6-acetyllysine modification is found at K144. T176 carries the phosphothreonine; by AMPK modification. K182 is modified (N6-acetyllysine). Residues 211-275 (YLTTNDDPPH…NDPKGSPFEN (65 aa)) are disordered. Over residues 217–235 (DPPHTKPTENRNSSRDKCA) the composition is skewed to basic and acidic residues. Polar residues predominate over residues 242-258 (TQPQSQHAQAKPTTLSL). K252, K269, K276, K319, K345, K411, K440, and K449 each carry N6-acetyllysine. Positions 288–350 (GTAGLTPPTT…HSTKKGPEQS (63 aa)) are disordered. An interaction with PPARG region spans residues 291–337 (GLTPPTTPPHKANQDNPFKASPKLKPSCKTVVPPPTKRARYSECSGT). Positions 348–796 (EQSELYAQLS…LKEAQRSLRR (449 aa)) are mediates interaction with RNF34. S537 is modified (phosphoserine; by AMPK). Disordered stretches follow at residues 541 to 597 (FNSP…SSRS) and 611 to 669 (HRNS…QKQK). Basic residues predominate over residues 561–576 (QRMRSRSRSFSRHRSC). Positions 577–597 (SRSPYSRSRSRSPGSRSSSRS) are enriched in low complexity. Residues 620–629 (SRSRSPYSRR) are compositionally biased toward basic residues. Positions 630-669 (PRYDSYEANEHERLKRDEYRREYEKRESERAKQRERQKQK) are enriched in basic and acidic residues. The 77-residue stretch at 675–751 (RVIYVGKIRP…TDFELYFCGR (77 aa)) folds into the RRM domain. N6-acetyllysine is present on residues K756 and K777.

Homooligomer. Interacts with MYBBP1A; inhibits MYBBP1A transcriptional activation. Interacts with PRDM16, LPIN1 and PML. Interacts (via LXXLL motif) with RORA and RORC (via AF-2 motif); activates RORA and RORC transcriptional activation. Interacts with LRPPRC. Interacts with FOXO1. Interacts with NR5A2. Phosphorylation by AMPK in skeletal muscle increases activation of its own promoter. Phosphorylated by CLK2. Post-translationally, heavily acetylated by KAT2A/GCN5 under conditions of high nutrients, leading to inactivation of PPARGC1A. Deacetylated by SIRT1 in low nutrients/high NAD conditions, leading to its activation. In terms of processing, ubiquitinated. Ubiquitination by RNF34 induces proteasomal degradation.

Its subcellular location is the nucleus. It localises to the PML body. Its function is as follows. Transcriptional coactivator for steroid receptors and nuclear receptors. Greatly increases the transcriptional activity of PPARG and thyroid hormone receptor on the uncoupling protein promoter. Can regulate key mitochondrial genes that contribute to the program of adaptive thermogenesis. Plays an essential role in metabolic reprogramming in response to dietary availability through coordination of the expression of a wide array of genes involved in glucose and fatty acid metabolism. Acts as a key regulator of gluconeogenesis: stimulates hepatic gluconeogenesis by increasing the expression of gluconeogenic enzymes, and acting together with FOXO1 to promote the fasting gluconeogenic program. Induces the expression of PERM1 in the skeletal muscle in an ESRRA-dependent manner. Also involved in the integration of the circadian rhythms and energy metabolism. Required for oscillatory expression of clock genes, such as BMAL1 and NR1D1, through the coactivation of RORA and RORC, and metabolic genes, such as PDK4 and PEPCK. The protein is Peroxisome proliferator-activated receptor gamma coactivator 1-alpha (Ppargc1a) of Rattus norvegicus (Rat).